Reading from the N-terminus, the 338-residue chain is Fructose-1,6-bisphosphatase class 1 (338 aa).

4 residues coordinate Mg(2+): Glu-90, Asp-112, Leu-114, and Asp-115. Substrate is bound by residues 115 to 118, Asn-207, and Lys-273; that span reads DGSS. A Mg(2+)-binding site is contributed by Glu-279.

Belongs to the FBPase class 1 family. As to quaternary structure, homotetramer. The cofactor is Mg(2+).

It is found in the cytoplasm. The catalysed reaction is beta-D-fructose 1,6-bisphosphate + H2O = beta-D-fructose 6-phosphate + phosphate. It functions in the pathway carbohydrate biosynthesis; gluconeogenesis. In Stenotrophomonas maltophilia (strain K279a), this protein is Fructose-1,6-bisphosphatase class 1.